The following is a 1447-amino-acid chain: Gag-Pol polyprotein (1447 aa).

Glycine 2 is lipidated: N-myristoyl glycine; by host. Residues 7 to 31 (VLSGGELDRWEKIRLRPGGKKKYKL) form an interaction with Gp41 region. The tract at residues 8–43 (LSGGELDRWEKIRLRPGGKKKYKLKHIVWASRELER) is interaction with host CALM1. Positions 12–19 (ELDRWEKI) are interaction with host AP3D1. An interaction with membrane phosphatidylinositol 4,5-bisphosphate and RNA region spans residues 14–33 (DRWEKIRLRPGGKKKYKLKH). The Nuclear export signal signature appears at 16–22 (WEKIRLR). Residues 26 to 32 (KKKYKLK) carry the Nuclear localization signal motif. An interaction with membrane phosphatidylinositol 4,5-bisphosphate region spans residues 73-77 (EELRS). The tract at residues 106–128 (EEQNKSKKKAQQAAADTGHSSQV) is disordered. Position 132 is a phosphotyrosine; by host (tyrosine 132). The interaction with human PPIA/CYPA and NUP153 stretch occupies residues 189–227 (NTVGGHQAAMQMLKETINEEAAEWDRVHPVHAGPIAPGQ). Residues 277-363 (YSPTSILDIR…GGPGHKARVL (87 aa)) form a dimerization/Multimerization of capsid protein p24 region. 2 CCHC-type zinc fingers span residues 390–407 (VKCFNCGKEGHIARNCRA) and 411–428 (KGCWKCGKEGHQMKDCTE). Residues 447–476 (EFSSEQTRANSPTISSEQTRANSPTRRELQ) are disordered. Positions 450–470 (SEQTRANSPTISSEQTRANSP) are enriched in polar residues. The tract at residues 501-505 (PQITL) is dimerization of protease. In terms of domain architecture, Peptidase A2 spans 520-589 (KEALLDTGAD…TPVNIIGRNL (70 aa)). The active-site For protease activity; shared with dimeric partner is aspartate 525. Dimerization of protease regions lie at residues 549 to 555 (GIGGFIK) and 588 to 600 (NLLTQIGCTLNFP). The Reverse transcriptase domain occupies 643 to 833 (EGKISKIGPE…PPFLWMGYEL (191 aa)). Positions 709, 784, and 785 each coordinate Mg(2+). The tract at residues 826-834 (FLWMGYELH) is RT 'primer grip'. The Tryptophan repeat motif signature appears at 997 to 1013 (WETWWTEYWQATWIPEW). Residues 1033-1156 (IVGAETFYVD…VDKLVSAGIR (124 aa)) form the RNase H type-1 domain. Mg(2+) is bound by residues aspartate 1042, glutamate 1077, aspartate 1097, and aspartate 1148. Residues 1162 to 1203 (DGIDKAQDEHEKYHSNWRAMASDFNLPPVVAKEIVASCDKCQ) form an Integrase-type zinc finger. Residues histidine 1171, histidine 1175, cysteine 1199, and cysteine 1202 each coordinate Zn(2+). In terms of domain architecture, Integrase catalytic spans 1213-1363 (VDCSPGIWQL…SAGERIVDII (151 aa)). Mg(2+) contacts are provided by aspartate 1223, aspartate 1275, and glutamate 1311. A DNA-binding region (integrase-type) is located at residues 1382–1429 (FRVYYRDSRDPLWKGPAKLLWKGEGAVVIQDNSDIKVVPRRKAKIIRD).

As to quaternary structure, homotrimer; further assembles as hexamers of trimers. Interacts with gp41 (via C-terminus). Interacts with host CALM1; this interaction induces a conformational change in the Matrix protein, triggering exposure of the myristate group. Interacts with host AP3D1; this interaction allows the polyprotein trafficking to multivesicular bodies during virus assembly. Part of the pre-integration complex (PIC) which is composed of viral genome, matrix protein, Vpr and integrase. In terms of assembly, homodimer; the homodimer further multimerizes as homohexamers or homopentamers. Interacts with human PPIA/CYPA; This interaction stabilizes the capsid. Interacts with human NUP153. Interacts with host PDZD8; this interaction stabilizes the capsid. Interacts with monkey TRIM5; this interaction destabilizes the capsid. Homodimer, whose active site consists of two apposed aspartic acid residues. As to quaternary structure, heterodimer of p66 RT and p51 RT (RT p66/p51). Heterodimerization of RT is essential for DNA polymerase activity. The overall folding of the subdomains is similar in p66 RT and p51 RT but the spatial arrangements of the subdomains are dramatically different. In terms of assembly, homotetramer; may further associate as a homohexadecamer. Part of the pre-integration complex (PIC) which is composed of viral genome, matrix protein, Vpr and integrase. Interacts with human SMARCB1/INI1 and human PSIP1/LEDGF isoform 1. Interacts with human KPNA3; this interaction might play a role in nuclear import of the pre-integration complex. Interacts with human NUP153; this interaction might play a role in nuclear import of the pre-integration complex. Requires Mg(2+) as cofactor. Specific enzymatic cleavages by the viral protease yield mature proteins. The protease is released by autocatalytic cleavage. The polyprotein is cleaved during and after budding, this process is termed maturation. Proteolytic cleavage of p66 RT removes the RNase H domain to yield the p51 RT subunit. Nucleocapsid protein p7 might be further cleaved after virus entry. In terms of processing, tyrosine phosphorylated presumably in the virion by a host kinase. Phosphorylation is apparently not a major regulator of membrane association. Post-translationally, phosphorylated possibly by host MAPK1; this phosphorylation is necessary for Pin1-mediated virion uncoating. Methylated by host PRMT6, impairing its function by reducing RNA annealing and the initiation of reverse transcription.

The protein localises to the host cell membrane. Its subcellular location is the host endosome. It is found in the host multivesicular body. It localises to the virion membrane. The protein resides in the host nucleus. The protein localises to the host cytoplasm. Its subcellular location is the virion. The enzyme catalyses Specific for a P1 residue that is hydrophobic, and P1' variable, but often Pro.. The catalysed reaction is Endohydrolysis of RNA in RNA/DNA hybrids. Three different cleavage modes: 1. sequence-specific internal cleavage of RNA. Human immunodeficiency virus type 1 and Moloney murine leukemia virus enzymes prefer to cleave the RNA strand one nucleotide away from the RNA-DNA junction. 2. RNA 5'-end directed cleavage 13-19 nucleotides from the RNA end. 3. DNA 3'-end directed cleavage 15-20 nucleotides away from the primer terminus.. It catalyses the reaction 3'-end directed exonucleolytic cleavage of viral RNA-DNA hybrid.. It carries out the reaction DNA(n) + a 2'-deoxyribonucleoside 5'-triphosphate = DNA(n+1) + diphosphate. The viral protease is inhibited by many synthetic protease inhibitors (PIs), such as amprenavir, atazanavir, indinavir, loprinavir, nelfinavir, ritonavir and saquinavir. RT can be inhibited either by nucleoside RT inhibitors (NRTIs) or by non nucleoside RT inhibitors (NNRTIs). NRTIs act as chain terminators, whereas NNRTIs inhibit DNA polymerization by binding a small hydrophobic pocket near the RT active site and inducing an allosteric change in this region. Classical NRTIs are abacavir, adefovir (PMEA), didanosine (ddI), lamivudine (3TC), stavudine (d4T), tenofovir (PMPA), zalcitabine (ddC), and zidovudine (AZT). Classical NNRTIs are atevirdine (BHAP U-87201E), delavirdine, efavirenz (DMP-266), emivirine (I-EBU), and nevirapine (BI-RG-587). The tritherapies used as a basic effective treatment of AIDS associate two NRTIs and one NNRTI. Use of protease inhibitors in tritherapy regimens permit more ambitious therapeutic strategies. Gag-Pol polyprotein and Gag polyprotein may regulate their own translation, by the binding genomic RNA in the 5'-UTR. At low concentration, Gag-Pol and Gag would promote translation, whereas at high concentration, the polyproteins encapsidate genomic RNA and then shut off translation. Functionally, matrix protein p17 targets Gag and Gag-pol polyproteins to the plasma membrane via a multipartite membrane-binding signal, that includes its myristoylated N-terminus. Matrix protein is part of the pre-integration complex. Implicated in the release from host cell mediated by Vpu. Binds to RNA. Its function is as follows. Forms the conical core that encapsulates the genomic RNA-nucleocapsid complex in the virion. Most core are conical, with only 7% tubular. The core is constituted by capsid protein hexamer subunits. The core is disassembled soon after virion entry. Host restriction factors such as TRIM5-alpha or TRIMCyp bind retroviral capsids and cause premature capsid disassembly, leading to blocks in reverse transcription. Capsid restriction by TRIM5 is one of the factors which restricts HIV-1 to the human species. Host PIN1 apparently facilitates the virion uncoating. On the other hand, interactions with PDZD8 or CYPA stabilize the capsid. In terms of biological role, nucleocapsid protein p7 encapsulates and protects viral dimeric unspliced genomic RNA (gRNA). Binds these RNAs through its zinc fingers. Acts as a nucleic acid chaperone which is involved in rearangement of nucleic acid secondary structure during gRNA retrotranscription. Also facilitates template switch leading to recombination. As part of the polyprotein, participates in gRNA dimerization, packaging, tRNA incorporation and virion assembly. The aspartyl protease mediates proteolytic cleavages of Gag and Gag-Pol polyproteins during or shortly after the release of the virion from the plasma membrane. Cleavages take place as an ordered, step-wise cascade to yield mature proteins. This process is called maturation. Displays maximal activity during the budding process just prior to particle release from the cell. Also cleaves Nef and Vif, probably concomitantly with viral structural proteins on maturation of virus particles. Hydrolyzes host EIF4GI and PABP1 in order to shut off the capped cellular mRNA translation. The resulting inhibition of cellular protein synthesis serves to ensure maximal viral gene expression and to evade host immune response. Also mediates cleavage of host YTHDF3. Mediates cleavage of host CARD8, thereby activating the CARD8 inflammasome, leading to the clearance of latent HIV-1 in patient CD4(+) T-cells after viral reactivation; in contrast, HIV-1 can evade CARD8-sensing when its protease remains inactive in infected cells prior to viral budding. Functionally, reverse transcriptase/ribonuclease H (RT) is a multifunctional enzyme that converts the viral RNA genome into dsDNA in the cytoplasm, shortly after virus entry into the cell. This enzyme displays a DNA polymerase activity that can copy either DNA or RNA templates, and a ribonuclease H (RNase H) activity that cleaves the RNA strand of RNA-DNA heteroduplexes in a partially processive 3' to 5' endonucleasic mode. Conversion of viral genomic RNA into dsDNA requires many steps. A tRNA(3)-Lys binds to the primer-binding site (PBS) situated at the 5'-end of the viral RNA. RT uses the 3' end of the tRNA primer to perform a short round of RNA-dependent minus-strand DNA synthesis. The reading proceeds through the U5 region and ends after the repeated (R) region which is present at both ends of viral RNA. The portion of the RNA-DNA heteroduplex is digested by the RNase H, resulting in a ssDNA product attached to the tRNA primer. This ssDNA/tRNA hybridizes with the identical R region situated at the 3' end of viral RNA. This template exchange, known as minus-strand DNA strong stop transfer, can be either intra- or intermolecular. RT uses the 3' end of this newly synthesized short ssDNA to perform the RNA-dependent minus-strand DNA synthesis of the whole template. RNase H digests the RNA template except for two polypurine tracts (PPTs) situated at the 5'-end and near the center of the genome. It is not clear if both polymerase and RNase H activities are simultaneous. RNase H probably can proceed both in a polymerase-dependent (RNA cut into small fragments by the same RT performing DNA synthesis) and a polymerase-independent mode (cleavage of remaining RNA fragments by free RTs). Secondly, RT performs DNA-directed plus-strand DNA synthesis using the PPTs that have not been removed by RNase H as primers. PPTs and tRNA primers are then removed by RNase H. The 3' and 5' ssDNA PBS regions hybridize to form a circular dsDNA intermediate. Strand displacement synthesis by RT to the PBS and PPT ends produces a blunt ended, linear dsDNA copy of the viral genome that includes long terminal repeats (LTRs) at both ends. Its function is as follows. Catalyzes viral DNA integration into the host chromosome, by performing a series of DNA cutting and joining reactions. This enzyme activity takes place after virion entry into a cell and reverse transcription of the RNA genome in dsDNA. The first step in the integration process is 3' processing. This step requires a complex comprising the viral genome, matrix protein, Vpr and integrase. This complex is called the pre-integration complex (PIC). The integrase protein removes 2 nucleotides from each 3' end of the viral DNA, leaving recessed CA OH's at the 3' ends. In the second step, the PIC enters cell nucleus. This process is mediated through integrase and Vpr proteins, and allows the virus to infect a non dividing cell. This ability to enter the nucleus is specific of lentiviruses, other retroviruses cannot and rely on cell division to access cell chromosomes. In the third step, termed strand transfer, the integrase protein joins the previously processed 3' ends to the 5' ends of strands of target cellular DNA at the site of integration. The 5'-ends are produced by integrase-catalyzed staggered cuts, 5 bp apart. A Y-shaped, gapped, recombination intermediate results, with the 5'-ends of the viral DNA strands and the 3' ends of target DNA strands remaining unjoined, flanking a gap of 5 bp. The last step is viral DNA integration into host chromosome. This involves host DNA repair synthesis in which the 5 bp gaps between the unjoined strands are filled in and then ligated. Since this process occurs at both cuts flanking the HIV genome, a 5 bp duplication of host DNA is produced at the ends of HIV-1 integration. Alternatively, Integrase may catalyze the excision of viral DNA just after strand transfer, this is termed disintegration. The protein is Gag-Pol polyprotein (gag-pol) of Homo sapiens (Human).